The primary structure comprises 353 residues: Magnesium-chelatase subunit ChlI (353 aa).

Residue 45–52 (GDRGTGKS) participates in ATP binding.

It belongs to the Mg-chelatase subunits D/I family.

Its subcellular location is the plastid. The protein resides in the chloroplast. It catalyses the reaction protoporphyrin IX + Mg(2+) + ATP + H2O = Mg-protoporphyrin IX + ADP + phosphate + 3 H(+). It participates in porphyrin-containing compound metabolism; chlorophyll biosynthesis. In terms of biological role, involved in chlorophyll biosynthesis; introduces a magnesium ion into protoporphyrin IX to yield Mg-protoporphyrin IX. This is Magnesium-chelatase subunit ChlI (chlI) from Guillardia theta (Cryptophyte).